Here is a 271-residue protein sequence, read N- to C-terminus: Formamidopyrimidine-DNA glycosylase (271 aa).

Proline 2 acts as the Schiff-base intermediate with DNA in catalysis. The active-site Proton donor is the glutamate 3. The active-site Proton donor; for beta-elimination activity is lysine 58. Histidine 91, arginine 110, and arginine 152 together coordinate DNA. The FPG-type zinc-finger motif lies at 237-271 (NVYGRGGKACKKCRKPLTEKKLGQRTTVYCTHCQK). Arginine 261 functions as the Proton donor; for delta-elimination activity in the catalytic mechanism.

Belongs to the FPG family. As to quaternary structure, monomer. Zn(2+) is required as a cofactor.

The catalysed reaction is Hydrolysis of DNA containing ring-opened 7-methylguanine residues, releasing 2,6-diamino-4-hydroxy-5-(N-methyl)formamidopyrimidine.. The enzyme catalyses 2'-deoxyribonucleotide-(2'-deoxyribose 5'-phosphate)-2'-deoxyribonucleotide-DNA = a 3'-end 2'-deoxyribonucleotide-(2,3-dehydro-2,3-deoxyribose 5'-phosphate)-DNA + a 5'-end 5'-phospho-2'-deoxyribonucleoside-DNA + H(+). Functionally, involved in base excision repair of DNA damaged by oxidation or by mutagenic agents. Acts as a DNA glycosylase that recognizes and removes damaged bases. Has a preference for oxidized purines, such as 7,8-dihydro-8-oxoguanine (8-oxoG). Has AP (apurinic/apyrimidinic) lyase activity and introduces nicks in the DNA strand. Cleaves the DNA backbone by beta-delta elimination to generate a single-strand break at the site of the removed base with both 3'- and 5'-phosphates. The protein is Formamidopyrimidine-DNA glycosylase of Saccharophagus degradans (strain 2-40 / ATCC 43961 / DSM 17024).